Here is a 132-residue protein sequence, read N- to C-terminus: Spermatogenesis-associated protein 33 (132 aa).

Residues 1-60 (MGQSKSKPREKKEEEKSTTTLVTKSKEKVMEKEAKQSDKESQPAESLLFATSKHSRPSSS) are interaction with ATG16L1. The segment at 1–81 (MGQSKSKPRE…SKKRSVIPQI (81 aa)) is disordered. Basic and acidic residues predominate over residues 24–42 (KSKEKVMEKEAKQSDKESQ). An interaction with VDAC2 region spans residues 61–132 (SEDKPETKQR…IAAYDVHNTE (72 aa)). The PQIIIT signature appears at 79–84 (PQIIIT). Ser87 is subject to Phosphoserine. The segment at 110 to 132 (DWGPYHRHRSPSTIAAYDVHNTE) is disordered.

In terms of assembly, interacts (via PQIIIT motif) with PPP3R2 and PPP3CC. Interacts with VDAC2. Interacts with ATG16L1 (via WD repeats). Interacts with PPP3R1, PPP3CA and PPP3CB. Predominantly expressed in the testis (at protein level). Expressed in the sperm midpiece (at protein level).

It localises to the cytoplasm. It is found in the cytosol. The protein resides in the nucleus. Its subcellular location is the mitochondrion. Plays an important role in sperm motility and male fertility. Required for sperm midpiece flexibility and for the localization of sperm calcineurin to the mitochondria. Promotes mitophagy as well as acts as an autophagy mediator in male germline cells. Links damaged mitochondria to autophagosomes via its binding to the outer mitochondrial membrane protein VDAC2, as well as to key autophagy machinery component ATG16L1. This Mus musculus (Mouse) protein is Spermatogenesis-associated protein 33 (Spata33).